Here is a 296-residue protein sequence, read N- to C-terminus: Probable AP endonuclease (296 aa).

Residues cysteine 16 and cysteine 20 are joined by a disulfide bond. Residues histidine 78, histidine 115, glutamate 142, histidine 182, histidine 218, aspartate 231, histidine 233, and glutamate 271 each coordinate Zn(2+).

It belongs to the AP endonuclease 2 family. Requires Zn(2+) as cofactor.

It is found in the host nucleus. Its subcellular location is the host cytoplasm. The protein localises to the virion. Its function is as follows. Endonuclease of the viral base excision repair system that catalyzes DNA cleavage reaction at the apurinic or apyrimidinic sites (AP sites). Cleaves phosphodiester bonds on the 5' side of AP sites. In addition to endonuclease activity, the AP endonuclease has a proofreading 3'-5' exonuclease activity that is considerably more efficient in the elimination of a mismatch than in that of a correctly paired base. Displays 3'-phosphatase and 3'-repair diesterase activities. The single nucleotide gaps generated by the AP endonuclease are filled by the viral repair DNA polymerase X and the DNA ligase. This is Probable AP endonuclease from Ornithodoros (relapsing fever ticks).